Consider the following 268-residue polypeptide: GTP cyclohydrolase III (268 aa).

This sequence belongs to the archaeal-type GTP cyclohydrolase family. In terms of assembly, homotrimer. Mg(2+) is required as a cofactor.

The enzyme catalyses GTP + 3 H2O = 2-amino-5-formylamino-6-(5-phospho-D-ribosylamino)pyrimidin-4(3H)-one + 2 phosphate + 2 H(+). In terms of biological role, catalyzes the formation of 2-amino-5-formylamino-6-ribofuranosylamino-4(3H)-pyrimidinone ribonucleotide monophosphate and inorganic phosphate from GTP. Also has an independent pyrophosphate phosphohydrolase activity. The polypeptide is GTP cyclohydrolase III (gch3) (Methanocaldococcus jannaschii (strain ATCC 43067 / DSM 2661 / JAL-1 / JCM 10045 / NBRC 100440) (Methanococcus jannaschii)).